Here is a 439-residue protein sequence, read N- to C-terminus: RNA polymerase II-associated protein RBA50 (439 aa).

Disordered stretches follow at residues 1 to 35 (MDLL…GFPE) and 49 to 79 (LREK…SEAK). The segment covering 15–30 (SVESNDNGTLSTNNCG) has biased composition (polar residues).

This sequence belongs to the RPAP1 family.

The protein localises to the cytoplasm. In terms of biological role, forms an interface between the RNA polymerase II enzyme and chaperone/scaffolding proteins, suggesting that it is required to connect RNA polymerase II to regulators of protein complex formation. The sequence is that of RNA polymerase II-associated protein RBA50 (RBA50) from Saccharomyces cerevisiae (strain ATCC 204508 / S288c) (Baker's yeast).